The primary structure comprises 654 residues: tRNA 5-methylaminomethyl-2-thiouridine biosynthesis bifunctional protein MnmC (654 aa).

Positions 1–236 (MPTLLQHAQI…KWEVMSGAYV (236 aa)) are tRNA (mnm(5)s(2)U34)-methyltransferase. The segment at 262–654 (IGAGLAGSSS…FGLRRLIRGK (393 aa)) is FAD-dependent cmnm(5)s(2)U34 oxidoreductase.

In the N-terminal section; belongs to the methyltransferase superfamily. tRNA (mnm(5)s(2)U34)-methyltransferase family. It in the C-terminal section; belongs to the DAO family. Requires FAD as cofactor.

The protein resides in the cytoplasm. It catalyses the reaction 5-aminomethyl-2-thiouridine(34) in tRNA + S-adenosyl-L-methionine = 5-methylaminomethyl-2-thiouridine(34) in tRNA + S-adenosyl-L-homocysteine + H(+). Catalyzes the last two steps in the biosynthesis of 5-methylaminomethyl-2-thiouridine (mnm(5)s(2)U) at the wobble position (U34) in tRNA. Catalyzes the FAD-dependent demodification of cmnm(5)s(2)U34 to nm(5)s(2)U34, followed by the transfer of a methyl group from S-adenosyl-L-methionine to nm(5)s(2)U34, to form mnm(5)s(2)U34. The chain is tRNA 5-methylaminomethyl-2-thiouridine biosynthesis bifunctional protein MnmC from Pseudomonas putida (strain ATCC 700007 / DSM 6899 / JCM 31910 / BCRC 17059 / LMG 24140 / F1).